We begin with the raw amino-acid sequence, 108 residues long: Protein translation factor SUI1 (108 aa).

Residues 1–20 are disordered; the sequence is MSIENLKSFDPFADTGDDEA.

The protein belongs to the SUI1 family.

Its function is as follows. Additional factor that functions in concert with eIF-2 and the initiator tRNA in directing the ribosome to the proper start site of translation. This is Protein translation factor SUI1 (SUI1A) from Eremothecium gossypii (strain ATCC 10895 / CBS 109.51 / FGSC 9923 / NRRL Y-1056) (Yeast).